The sequence spans 317 residues: Acetyl-coenzyme A carboxylase carboxyl transferase subunit alpha (317 aa).

Residues 33-294 (NLDDEITRLQ…KKRLLADLAD (262 aa)) form the CoA carboxyltransferase C-terminal domain.

It belongs to the AccA family. In terms of assembly, acetyl-CoA carboxylase is a heterohexamer composed of biotin carboxyl carrier protein (AccB), biotin carboxylase (AccC) and two subunits each of ACCase subunit alpha (AccA) and ACCase subunit beta (AccD).

It localises to the cytoplasm. It catalyses the reaction N(6)-carboxybiotinyl-L-lysyl-[protein] + acetyl-CoA = N(6)-biotinyl-L-lysyl-[protein] + malonyl-CoA. Its pathway is lipid metabolism; malonyl-CoA biosynthesis; malonyl-CoA from acetyl-CoA: step 1/1. In terms of biological role, component of the acetyl coenzyme A carboxylase (ACC) complex. First, biotin carboxylase catalyzes the carboxylation of biotin on its carrier protein (BCCP) and then the CO(2) group is transferred by the carboxyltransferase to acetyl-CoA to form malonyl-CoA. This Histophilus somni (strain 2336) (Haemophilus somnus) protein is Acetyl-coenzyme A carboxylase carboxyl transferase subunit alpha.